The sequence spans 279 residues: Thymidylate synthase (279 aa).

133-134 (RR) is a binding site for dUMP. The Nucleophile role is filled by Cys-154. DUMP contacts are provided by residues 178–181 (RSND), Asn-189, and 219–221 (HIY). Asp-181 serves as a coordination point for (6R)-5,10-methylene-5,6,7,8-tetrahydrofolate. (6R)-5,10-methylene-5,6,7,8-tetrahydrofolate is bound at residue Ala-278.

It belongs to the thymidylate synthase family. Bacterial-type ThyA subfamily. Homodimer.

It is found in the cytoplasm. The enzyme catalyses dUMP + (6R)-5,10-methylene-5,6,7,8-tetrahydrofolate = 7,8-dihydrofolate + dTMP. It functions in the pathway pyrimidine metabolism; dTTP biosynthesis. Its function is as follows. Catalyzes the reductive methylation of 2'-deoxyuridine-5'-monophosphate (dUMP) to 2'-deoxythymidine-5'-monophosphate (dTMP) while utilizing 5,10-methylenetetrahydrofolate (mTHF) as the methyl donor and reductant in the reaction, yielding dihydrofolate (DHF) as a by-product. This enzymatic reaction provides an intracellular de novo source of dTMP, an essential precursor for DNA biosynthesis. The sequence is that of Thymidylate synthase from Streptococcus pneumoniae (strain 70585).